A 55-amino-acid chain; its full sequence is Large ribosomal subunit protein bL33 (55 aa).

It belongs to the bacterial ribosomal protein bL33 family.

This is Large ribosomal subunit protein bL33 from Polaromonas sp. (strain JS666 / ATCC BAA-500).